Consider the following 639-residue polypeptide: MQAEQTRCAAARGSAEMESLWHAAPGDEEIPLHPPPTPGAMSLESDSSLDTLAEKIECDLMDLLGDMGPPCDIDEEEDQLFAEALPPLYSQPTENPPPPNAANSIPEQAGKQPAEGKTNTERNERPMRRKRREDGDVGQPNPRRRTHARSRSPRAGSTSSQQPPSSSGGARKPCVRREAGDRETSEKPARGKYCAPFPRQAPHQCQSPPAQTASQKPPPRPQRPPSTTAYSPDRTPHDHQERRHEGAGKMIRSVVTKQDARKPPRRVPHRGCGTGRHGRRTPEKWGAPPSMVVPLKFTREYWEKHRNELKKPVWRDYSRSACTARDPARAHDSGAECPPTEKRDERRTCAPSQPRWLREDRNAARFFDKAKDAFGGLALPTDDMCTRNRDLLRAMADEVVDDDDCEDLDLTRQMCFPTMIGPQSRAAGPVGARMDSWSELCRRAAFLKARWSSQPSVTRVARAVRSLYLTNCSFDELLEACDETLTWMLWHQFEDERLCPHDPIFSNIYALVQGLVTRLGAVLHCHLAASKSPLADPTRTSELPLQSATCPLTLFLTFADRFARVMHGHPHVTLVGHKIVDHEGVLRTLYLPGMCARKIPVVLDQHANVCRKEECRLLCAQLLGKQYTVGKFLCCDLYA.

Disordered regions lie at residues 1–45 (MQAE…SLES), 63–287 (LLGD…KWGA), and 322–355 (CTAR…SQPR). Basic residues predominate over residues 142–152 (PRRRTHARSRS). Low complexity predominate over residues 153–169 (PRAGSTSSQQPPSSSGG). The segment covering 175–189 (VRREAGDRETSEKPA) has biased composition (basic and acidic residues). A compositionally biased stretch (polar residues) spans 203–215 (HQCQSPPAQTASQ). 2 stretches are compositionally biased toward basic and acidic residues: residues 234 to 247 (RTPH…HEGA) and 326 to 348 (DPAR…ERRT). Cysteine 525, histidine 606, cysteine 610, and cysteine 615 together coordinate Zn(2+). Residues 525 to 615 (CHLAASKSPL…HANVCRKEEC (91 aa)) form a CHC2-type zinc finger.

It belongs to the HHV-1 ICP27 protein family.

It localises to the host cytoplasm. It is found in the host nucleus. Multifunctional regulator of the expression of viral genes that mediates nuclear export of viral intronless mRNAs. This immediate early (EI) protein promotes the nuclear export of viral intronless mRNAs. This is mRNA export factor from Amazona oratrix (yellow-headed parrot).